The chain runs to 470 residues: Uronate isomerase (470 aa).

It belongs to the metallo-dependent hydrolases superfamily. Uronate isomerase family.

The catalysed reaction is D-glucuronate = D-fructuronate. It catalyses the reaction aldehydo-D-galacturonate = keto-D-tagaturonate. Its pathway is carbohydrate metabolism; pentose and glucuronate interconversion. In Escherichia fergusonii (strain ATCC 35469 / DSM 13698 / CCUG 18766 / IAM 14443 / JCM 21226 / LMG 7866 / NBRC 102419 / NCTC 12128 / CDC 0568-73), this protein is Uronate isomerase.